A 258-amino-acid chain; its full sequence is ER membrane protein complex subunit 3 (258 aa).

The next 3 membrane-spanning stretches (helical) occupy residues 8–28 (PALRNWVLLPIMFVMILIGIL), 123–143 (VVPQTIIMTWINEFFSGFILL), and 173–193 (SISWYFLNLFGLKSVYALLLG).

This sequence belongs to the EMC3 family.

The protein localises to the cytoplasm. It is found in the membrane. In Schizosaccharomyces pombe (strain 972 / ATCC 24843) (Fission yeast), this protein is ER membrane protein complex subunit 3.